Here is a 227-residue protein sequence, read N- to C-terminus: tRNA (guanine-N(1)-)-methyltransferase (227 aa).

S-adenosyl-L-methionine contacts are provided by residues Gly112 and 132 to 137 (IGDFIL).

The protein belongs to the RNA methyltransferase TrmD family. In terms of assembly, homodimer.

Its subcellular location is the cytoplasm. It catalyses the reaction guanosine(37) in tRNA + S-adenosyl-L-methionine = N(1)-methylguanosine(37) in tRNA + S-adenosyl-L-homocysteine + H(+). In terms of biological role, specifically methylates guanosine-37 in various tRNAs. The polypeptide is tRNA (guanine-N(1)-)-methyltransferase (Sulfurovum sp. (strain NBC37-1)).